The following is a 526-amino-acid chain: Putative UDP-glucuronosyltransferase ugt-48 (526 aa).

Residues 1–17 form the signal peptide; sequence MLLRILTFLAVCQVTTS. Asn-58 and Asn-305 each carry an N-linked (GlcNAc...) asparagine glycan. The helical transmembrane segment at 489-509 threads the bilayer; it reads FYNLDIIITAASIPVLIFIVL. N-linked (GlcNAc...) asparagine glycosylation is present at Asn-513.

Belongs to the UDP-glycosyltransferase family. As to quaternary structure, interacts with cmd-1 in the presence of Ca(2+).

The protein localises to the membrane. The catalysed reaction is glucuronate acceptor + UDP-alpha-D-glucuronate = acceptor beta-D-glucuronoside + UDP + H(+). This chain is Putative UDP-glucuronosyltransferase ugt-48 (ugt-48), found in Caenorhabditis elegans.